The sequence spans 445 residues: UPF0210 protein SPP_0289 (445 aa).

The protein belongs to the UPF0210 family. Homodimer.

The polypeptide is UPF0210 protein SPP_0289 (Streptococcus pneumoniae (strain P1031)).